A 207-amino-acid polypeptide reads, in one-letter code: MPKVTVYNQTGSQVGEIELAEAIFGIEPNEAVLFEAVMMQRASLRQGTHKVKTRSEVRGGGRKPWRQKGTGRARQGSIRSPQWRGGGTVFGPTPRSYAYKLPKKVRRLAIKSALATKVVENNIVVLEDLVLNAPKTKDMLAVLKGLTVEKKALIVTADANESVELSARNIPGVTVITADGVNVLDVLHHDKLIMTKAAVEKVEEVLA.

The disordered stretch occupies residues 45–89; it reads RQGTHKVKTRSEVRGGGRKPWRQKGTGRARQGSIRSPQWRGGGTV. The segment covering 60 to 71 has biased composition (basic residues); that stretch reads GGRKPWRQKGTG.

Belongs to the universal ribosomal protein uL4 family. Part of the 50S ribosomal subunit.

One of the primary rRNA binding proteins, this protein initially binds near the 5'-end of the 23S rRNA. It is important during the early stages of 50S assembly. It makes multiple contacts with different domains of the 23S rRNA in the assembled 50S subunit and ribosome. In terms of biological role, forms part of the polypeptide exit tunnel. The polypeptide is Large ribosomal subunit protein uL4 (Bacillus anthracis (strain A0248)).